The chain runs to 270 residues: tRNA pseudouridine synthase A (270 aa).

Catalysis depends on Asp-60, which acts as the Nucleophile. The segment at 107–111 is RNA binding; it reads FHARF. Residue Tyr-118 coordinates substrate. The tract at residues 168 to 172 is interaction with tRNA; that stretch reads QCQSR.

This sequence belongs to the tRNA pseudouridine synthase TruA family. Homodimer.

The enzyme catalyses uridine(38/39/40) in tRNA = pseudouridine(38/39/40) in tRNA. Functionally, formation of pseudouridine at positions 38, 39 and 40 in the anticodon stem and loop of transfer RNAs. In Klebsiella pneumoniae subsp. pneumoniae (strain ATCC 700721 / MGH 78578), this protein is tRNA pseudouridine synthase A.